The sequence spans 66 residues: Large ribosomal subunit protein bL33c (66 aa).

This sequence belongs to the bacterial ribosomal protein bL33 family.

It is found in the plastid. The protein resides in the chloroplast. This Phalaenopsis aphrodite subsp. formosana (Moth orchid) protein is Large ribosomal subunit protein bL33c.